The sequence spans 141 residues: Large ribosomal subunit protein uL11 (141 aa).

The protein belongs to the universal ribosomal protein uL11 family. As to quaternary structure, part of the ribosomal stalk of the 50S ribosomal subunit. Interacts with L10 and the large rRNA to form the base of the stalk. L10 forms an elongated spine to which L12 dimers bind in a sequential fashion forming a multimeric L10(L12)X complex. Post-translationally, one or more lysine residues are methylated.

Its function is as follows. Forms part of the ribosomal stalk which helps the ribosome interact with GTP-bound translation factors. This chain is Large ribosomal subunit protein uL11, found in Campylobacter fetus subsp. fetus (strain 82-40).